The following is a 333-amino-acid chain: Atrochrysone carboxyl ACP thioesterase (333 aa).

Zn(2+)-binding residues include histidine 104, histidine 106, aspartate 108, and histidine 109. Aspartate 108 (proton donor/acceptor) is an active-site residue.

The protein belongs to the metallo-beta-lactamase superfamily. Requires Zn(2+) as cofactor.

The enzyme catalyses atrochrysone carboxyl-[ACP] + H2O = atrochrysone carboxylate + holo-[ACP] + H(+). It functions in the pathway pigment biosynthesis. Its function is as follows. Atrochrysone carboxyl ACP thioesterase; part of the gene cluster that mediates the biosynthesis of the bianthraquinone cladofulvin, a conidial pigment not required for virulence but that plays a role in fitness and resistance to environmental stresses including UV light and low-temperature stress. The pathway begins with the synthesis of atrochrysone thioester by the polyketide synthase (PKS) claG. The atrochrysone carboxyl ACP thioesterase claF then breaks the thioester bond and releases the atrochrysone carboxylic acid from claG. This compound is decarboxylated by claH to yield emodin, which is further converted to chrysophanol hydroquinone by the reductase claC and the dehydratase claB. The cytochrome P450 monooxygenase claM then catalyzes the dimerization of nataloe-emodin to cladofulvin. This chain is Atrochrysone carboxyl ACP thioesterase, found in Passalora fulva (Tomato leaf mold).